Reading from the N-terminus, the 207-residue chain is BON1-associated protein 2 (207 aa).

Positions 1-112 (MSYSTFKRSL…GFAPQGHLNF (112 aa)) constitute a C2 domain.

Interacts with BON1, BON2 and BON3. Expressed in roots, leaves, stems and flowers.

It is found in the membrane. In terms of biological role, negative regulator of cell death and defense responses. Exhibits calcium-dependent phospholipid binding properties. In Arabidopsis thaliana (Mouse-ear cress), this protein is BON1-associated protein 2 (BAP2).